Consider the following 260-residue polypeptide: Large ribosomal subunit protein uL2 (260 aa).

The segment at 1–24 (MGRVIRAQRKGAGSVFKSHTHHRK) is disordered.

This sequence belongs to the universal ribosomal protein uL2 family.

It is found in the cytoplasm. The protein is Large ribosomal subunit protein uL2 (RPL8) of Solanum lycopersicum (Tomato).